A 228-amino-acid chain; its full sequence is Thermonuclease (228 aa).

Positions 1–23 (MTEYLLSAGICMAIVSILLIGMA) are cleaved as a signal peptide. Residues 24-60 (ISNVSKGQYAKRFFFFATSCLVLTLVVVSSLSSSANA) constitute a propeptide that is removed on maturation. Residues 58 to 70 (ANASQTDNGVNRS) are compositionally biased toward polar residues. Residues 58–83 (ANASQTDNGVNRSGSEDPTVYSATST) form a disordered region. Aspartate 100 is a Ca(2+) binding site. Residue arginine 114 is part of the active site. Residues aspartate 119 and threonine 120 each coordinate Ca(2+). Catalysis depends on residues glutamate 122 and arginine 166.

It belongs to the thermonuclease family. Requires Ca(2+) as cofactor.

It is found in the secreted. The enzyme catalyses Endonucleolytic cleavage to nucleoside 3'-phosphates and 3'-phosphooligonucleotide end-products.. Functionally, enzyme that catalyzes the hydrolysis of both DNA and RNA at the 5' position of the phosphodiester bond. The polypeptide is Thermonuclease (nuc) (Staphylococcus aureus (strain Mu50 / ATCC 700699)).